An 84-amino-acid polypeptide reads, in one-letter code: Dolichol phosphate-mannose biosynthesis regulatory protein (84 aa).

Transmembrane regions (helical) follow at residues 11–31 (FGLV…VILL) and 49–69 (YAVL…GLFI).

This sequence belongs to the DPM2 family. In terms of assembly, component of the dolichol-phosphate mannose (DPM) synthase complex composed of DPM1, DPM2 and DPM3; in the complex interacts directly with DPM3. Component of the glycosylphosphatidylinositol-N-acetylglucosaminyltransferase (GPI-GnT) complex composed at least by PIGA, PIGC, PIGH, PIGP, PIGQ, PIGY and DPM2. Interacts with PIGA, PIGC and PIGQ.

It is found in the endoplasmic reticulum membrane. It functions in the pathway protein modification; protein glycosylation. In terms of biological role, regulates the biosynthesis of dolichol phosphate-mannose. Regulatory subunit of the dolichol-phosphate mannose (DPM) synthase complex; essential for the ER localization and stable expression of DPM1. Part of the glycosylphosphatidylinositol-N-acetylglucosaminyltransferase (GPI-GnT) complex that catalyzes the transfer of N-acetylglucosamine from UDP-N-acetylglucosamine to phosphatidylinositol and participates in the first step of GPI biosynthesis. May act by regulating the GPI-GNT complex. The chain is Dolichol phosphate-mannose biosynthesis regulatory protein from Rattus norvegicus (Rat).